The primary structure comprises 367 residues: 4-hydroxy-3-methylbut-2-en-1-yl diphosphate synthase (flavodoxin) (367 aa).

Residues C268, C271, C303, and E310 each coordinate [4Fe-4S] cluster.

Belongs to the IspG family. Requires [4Fe-4S] cluster as cofactor.

The enzyme catalyses (2E)-4-hydroxy-3-methylbut-2-enyl diphosphate + oxidized [flavodoxin] + H2O + 2 H(+) = 2-C-methyl-D-erythritol 2,4-cyclic diphosphate + reduced [flavodoxin]. The protein operates within isoprenoid biosynthesis; isopentenyl diphosphate biosynthesis via DXP pathway; isopentenyl diphosphate from 1-deoxy-D-xylulose 5-phosphate: step 5/6. Its function is as follows. Converts 2C-methyl-D-erythritol 2,4-cyclodiphosphate (ME-2,4cPP) into 1-hydroxy-2-methyl-2-(E)-butenyl 4-diphosphate. This chain is 4-hydroxy-3-methylbut-2-en-1-yl diphosphate synthase (flavodoxin), found in Shouchella clausii (strain KSM-K16) (Alkalihalobacillus clausii).